Consider the following 583-residue polypeptide: SHC-transforming protein 1 (583 aa).

Met-1 is subject to N-acetylmethionine. 2 disordered regions span residues 1 to 92 and 113 to 137; these read MDLL…DDGE and KLSG…WTRH. Low complexity predominate over residues 16–44; the sequence is ESLSSLEEGASGSTPPEELPSPSASSLGP. A Phosphoserine modification is found at Ser-36. Ser-139 is subject to Phosphoserine. Residue Lys-154 is modified to N6-acetyllysine. The 184-residue stretch at 156-339 folds into the PID domain; sequence MGPGVSYLVR…AGFDGSAWDE (184 aa). Residues 340-487 are CH1; sequence EEEEPPDHQY…SMAEQLRGEP (148 aa). Residues Tyr-349 and Tyr-350 each carry the phosphotyrosine modification. A disordered region spans residues 372–416; that stretch reads AAPGAARSTAPSAQTPSHLGATLPVGQPVGGDPEVRKQMPPPPPC. Tyr-427 carries the post-translational modification Phosphotyrosine. Position 453 is a phosphoserine (Ser-453). The region spanning 488-579 is the SH2 domain; that stretch reads WFHGKLSRRE…GSELCLQQPV (92 aa).

As to quaternary structure, interacts with CPNE3; this interaction may mediate the binding of CPNE3 with ERBB2. Interacts with the Trk receptors NTRK1, NTRK2 and NTRK3; in a phosphotyrosine-dependent manner. Interacts with the NPXY motif of tyrosine-phosphorylated IGF1R and INSR in vitro via the PID domain. Once activated, binds to GRB2. Interacts with tyrosine-phosphorylated CD3T and DDR2. Interacts with the N-terminal region of APS. Interacts with phosphorylated LRP1 and IRS4. Interacts with INPP5D/SHIP1 and INPPL1/SHIP2. Interacts with ALK, GAB2, GRB7 and KIT. Interacts with PTPN6/SHP (tyrosine phosphorylated). Identified in a complex containing FGFR4, NCAM1, CDH2, PLCG1, FRS2, SRC, SHC1, GAP43 and CTTN. Interacts with FLT4 (tyrosine-phosphorylated). Interacts with EPHB1 and GRB2; activates the MAPK/ERK cascade to regulate cell migration. Interacts with PDGFRB (tyrosine-phosphorylated). Interacts with ERBB4. Interacts with TEK/TIE2 (tyrosine-phosphorylated). Interacts with PTK2/FAK1. Interacts with CEACAM1; this interaction is CEACAM1-phosphorylation-dependent and mediates interaction with EGFR or INSR resulting in decrease coupling of SHC1 to the MAPK3/ERK1-MAPK1/ERK2 pathway. Interacts (via PID domain) with PEAK1 (when phosphorylated). Found in a complex with PPP1CA, PPP1CC, SHC1 and PEAK1. Post-translationally, phosphorylated by activated epidermal growth factor receptor. Phosphorylated in response to KIT signaling. Tyrosine phosphorylated in response to FLT3 and FLT4 signaling and by ligand-activated ALK. Tyrosine phosphorylated by ligand-activated PDGFRB. Tyrosine phosphorylated by TEK/TIE2. May be tyrosine phosphorylated by activated PTK2/FAK1. Tyrosine phosphorylated by activated PTK2B/PYK2. Dephosphorylation by PTPN2 may regulate interaction with GRB2.

It is found in the cytoplasm. The protein localises to the cell junction. The protein resides in the focal adhesion. Functionally, signaling adapter that couples activated growth factor receptors to signaling pathways. Participates in a signaling cascade initiated by activated KIT and KITLG/SCF. Participates in signaling downstream of the angiopoietin receptor TEK/TIE2, and plays a role in the regulation of endothelial cell migration and sprouting angiogenesis. In Pongo abelii (Sumatran orangutan), this protein is SHC-transforming protein 1 (SHC1).